Here is a 280-residue protein sequence, read N- to C-terminus: MGSSQSTPKVQDANADAERIRKAQHSMAAAGGGSQCPLTPEQRAAASGENCGAGGACPVGADKASINPLNNELEHPNQKPAPDQPFALPTKREKSTIPKAGTETETWTYPSPQMFWNAMLKKGWRWQDDSLSKSDMENIISIHNANNEEAWREVLKWENLLHPECAEPKLKSFKGDAKNLSPRARFRNLFLGYDLPFDRHDWIVDRCGTKQVQYVIDYYDGGAVDPSSKLFTILDVRPAVNDIGNIWDRMVVAYWRFKFETLGFTPSLPIPPTEGHNVNH.

Positions 1–95 (MGSSQSTPKV…FALPTKREKS (95 aa)) are disordered. 2 HRM repeats span residues 35-40 (QCPLTP) and 56-61 (ACPVGA).

Belongs to the cytochrome c-type heme lyase family.

The protein localises to the mitochondrion inner membrane. It carries out the reaction holo-[cytochrome c] = apo-[cytochrome c] + heme b. Its function is as follows. Probable lyase that catalyzes the covalent linking of the heme group to the cytochrome C apoprotein to produce the mature functional cytochrome. This chain is Probable holocytochrome-c-type synthase (cchl-1), found in Caenorhabditis elegans.